A 590-amino-acid polypeptide reads, in one-letter code: DNA primase (590 aa).

The CHC2-type zinc finger occupies Cys37 to Cys61. In terms of domain architecture, Toprim spans Gly255 to Pro337. Residues Glu261, Asp305, and Asp307 each contribute to the Mg(2+) site.

The protein belongs to the DnaG primase family. In terms of assembly, monomer. Interacts with DnaB. Zn(2+) serves as cofactor. Mg(2+) is required as a cofactor.

The catalysed reaction is ssDNA + n NTP = ssDNA/pppN(pN)n-1 hybrid + (n-1) diphosphate.. RNA polymerase that catalyzes the synthesis of short RNA molecules used as primers for DNA polymerase during DNA replication. This is DNA primase from Neisseria meningitidis serogroup A / serotype 4A (strain DSM 15465 / Z2491).